Here is a 402-residue protein sequence, read N- to C-terminus: Nuclear hormone receptor family member nhr-96 (402 aa).

The segment at residues 4-79 (FGLCAVCGQV…VGMDVKKIQQ (76 aa)) is a DNA-binding region (nuclear receptor). 2 consecutive NR C4-type zinc fingers follow at residues 7–27 (CAVC…CRSC) and 44–67 (CVKA…LKRC). The NR LBD domain maps to 154–402 (NYYNSLELLT…FSDPEMFELT (249 aa)).

Belongs to the nuclear hormone receptor family.

It is found in the nucleus. In terms of biological role, orphan nuclear receptor. The protein is Nuclear hormone receptor family member nhr-96 (nhr-96) of Caenorhabditis elegans.